The chain runs to 327 residues: Aquaporin-1 (327 aa).

Residues 1–34 form a disordered region; the sequence is MSSNDSNDTDKQHTRLDPTGVDDAYIPPEQPETK. At 1–48 the chain is on the cytoplasmic side; it reads MSSNDSNDTDKQHTRLDPTGVDDAYIPPEQPETKHHRFKISRDTLRNH. Residues 49 to 69 traverse the membrane as a helical segment; it reads FIAAVGEFCGTFMFLWCAYVI. Topologically, residues 70-91 are extracellular; it reads CNVANHDVALVAAPDGSHPGQL. Residues 92–112 traverse the membrane as a helical segment; the sequence is IMIAIGFGFSVMFSIWCFAGV. The Cytoplasmic portion of the chain corresponds to 113-136; that stretch reads SGGALNPAVSLSLCLARAVSPTRC. The NPA 1 motif lies at 118–120; the sequence is NPA. Residues 137–157 traverse the membrane as a helical segment; sequence VVMWVSQIVAGMAAGGAASAM. Topologically, residues 158 to 176 are extracellular; it reads TPGEVLFANSLGLGCSRTR. The chain crosses the membrane as a helical span at residues 177–197; sequence GLFLEMFGTAILCLTVLMTAV. The Cytoplasmic portion of the chain corresponds to 198 to 203; it reads EKRETN. The helical transmembrane segment at 204–224 threads the bilayer; the sequence is FMAALPIGISLFIAHVALTAY. The Extracellular segment spans residues 225-248; the sequence is TGTGVNPARSLGAAVAARYFPHYH. An NPA 2 motif is present at residues 230-232; the sequence is NPA. The chain crosses the membrane as a helical span at residues 249-269; it reads WIYWIGPLLGSILAWSVWQLL. At 270 to 327 the chain is on the cytoplasmic side; the sequence is QILDYTTYVTAEKAASTKEKAQKKVKPAVPLLWLKSNFPLLFFISRSLALNVIIFGKN.

Belongs to the MIP/aquaporin (TC 1.A.8) family.

The protein resides in the endoplasmic reticulum membrane. It localises to the cell membrane. Functionally, water channel required to facilitate the transport of water across membranes. Involved in sporulation, freeze tolerance and osmotolerance. Is non-functional in most laboratory strains. In Saccharomyces cerevisiae (Baker's yeast), this protein is Aquaporin-1 (AQY1).